The sequence spans 610 residues: DNA mismatch repair protein MutL (610 aa).

It belongs to the DNA mismatch repair MutL/HexB family.

Functionally, this protein is involved in the repair of mismatches in DNA. It is required for dam-dependent methyl-directed DNA mismatch repair. May act as a 'molecular matchmaker', a protein that promotes the formation of a stable complex between two or more DNA-binding proteins in an ATP-dependent manner without itself being part of a final effector complex. In Rickettsia conorii (strain ATCC VR-613 / Malish 7), this protein is DNA mismatch repair protein MutL.